Here is a 719-residue protein sequence, read N- to C-terminus: Anaphase-promoting complex subunit 4 (719 aa).

The WD repeat unit spans residues 57–96 (NSQRIWDVDFHDLEATELCWNHDGNLIVVGFKNGELKIID).

As to quaternary structure, the APC/C is composed of at least 13 subunits: apc1, apc2, nuc2, apc4, apc5, cut9, apc8, apc10, apc11, hcn1, apc13, apc14 and apc15. Interacts with apc1 and dim1.

Functionally, component of the anaphase-promoting complex/cyclosome (APC/C), a cell cycle-regulated E3 ubiquitin-protein ligase complex that controls progression through mitosis and the G1 phase of the cell cycle. The APC/C is thought to confer substrate specificity and, in the presence of ubiquitin-conjugating E2 enzymes, it catalyzes the formation of protein-ubiquitin conjugates that are subsequently degraded by the 26S proteasome. Has a role in promoting metaphase to anaphase transition via the ubiquitination of specific mitotic substrates. The chain is Anaphase-promoting complex subunit 4 (cut20) from Schizosaccharomyces pombe (strain 972 / ATCC 24843) (Fission yeast).